Consider the following 257-residue polypeptide: MIQNKLQNFVDTLPISPEKSCSYYPERLSQIQYFPFPEEISKEVLQFFFDSGFRRNGNILYRTSCCGCKDCLSYRIPLDQFVPSRNRKKLLKKNSDLKICFESPNLTLEKEILYLRYQRSRYQNFVIEESDQELLEGMRWNLFEYKENSLEMTLSLDGKILCFMILDFASDSLSAVYSVYDPDYPDRSLGSFAILSSILYAKELGMKYFHLGYFLPGHPNMDYKKYWTPAQIREPVSNENRWIETDDFQKRYSDFSW.

The protein belongs to the R-transferase family. Bpt subfamily.

Its subcellular location is the cytoplasm. It carries out the reaction N-terminal L-glutamyl-[protein] + L-leucyl-tRNA(Leu) = N-terminal L-leucyl-L-glutamyl-[protein] + tRNA(Leu) + H(+). It catalyses the reaction N-terminal L-aspartyl-[protein] + L-leucyl-tRNA(Leu) = N-terminal L-leucyl-L-aspartyl-[protein] + tRNA(Leu) + H(+). Functionally, functions in the N-end rule pathway of protein degradation where it conjugates Leu from its aminoacyl-tRNA to the N-termini of proteins containing an N-terminal aspartate or glutamate. In Leptospira interrogans serogroup Icterohaemorrhagiae serovar copenhageni (strain Fiocruz L1-130), this protein is Aspartate/glutamate leucyltransferase.